The sequence spans 274 residues: Acetyl-coenzyme A carboxylase carboxyl transferase subunit alpha (274 aa).

A CoA carboxyltransferase C-terminal domain is found at 1–245; sequence MENSQELTPW…RENLKKAIEG (245 aa).

The protein belongs to the AccA family. In terms of assembly, acetyl-CoA carboxylase is a heterohexamer composed of biotin carboxyl carrier protein (AccB), biotin carboxylase (AccC) and two subunits each of ACCase subunit alpha (AccA) and ACCase subunit beta (AccD).

It is found in the cytoplasm. The enzyme catalyses N(6)-carboxybiotinyl-L-lysyl-[protein] + acetyl-CoA = N(6)-biotinyl-L-lysyl-[protein] + malonyl-CoA. It participates in lipid metabolism; malonyl-CoA biosynthesis; malonyl-CoA from acetyl-CoA: step 1/1. Component of the acetyl coenzyme A carboxylase (ACC) complex. First, biotin carboxylase catalyzes the carboxylation of biotin on its carrier protein (BCCP) and then the CO(2) group is transferred by the carboxyltransferase to acetyl-CoA to form malonyl-CoA. The chain is Acetyl-coenzyme A carboxylase carboxyl transferase subunit alpha from Clostridium acetobutylicum (strain ATCC 824 / DSM 792 / JCM 1419 / IAM 19013 / LMG 5710 / NBRC 13948 / NRRL B-527 / VKM B-1787 / 2291 / W).